We begin with the raw amino-acid sequence, 964 residues long: E3 ubiquitin-protein ligase TRIM37 (964 aa).

Position 1 is an N-acetylmethionine (Met-1). The RING-type; degenerate zinc-finger motif lies at 15 to 55; the sequence is CFICMEKLRDARLCPHCSKLCCFSCIRRWLTEQRAQCPHCR. Residues 90 to 132 form a B box-type zinc finger; that stretch reads NEKDKCENHHEKLSVFCWTCKKCICHQCALWGGMHGGHTFKPL. The Zn(2+) site is built by Cys-95, His-98, Cys-117, and His-124. Positions 132–234 form a coiled coil; the sequence is LAEIYEQHVT…VEHQLRSCSK (103 aa). Residues 276-403 form the MATH domain; sequence YDSATFVLEN…NDTVILRFQV (128 aa). The stretch at 419 to 450 forms a coiled coil; that stretch reads ITQLEAAQTSYIQQINNLKERLTIELSRTQKS. Residue Ser-454 is modified to Phosphoserine. Disordered regions lie at residues 477 to 513, 530 to 554, and 640 to 663; these read CSDM…HHEL, QLDG…IDEE, and RPPA…RKQQ. A compositionally biased stretch (basic and acidic residues) spans 503 to 513; it reads KIQNEDYHHEL. The segment covering 534–544 has biased composition (low complexity); sequence SSSSASSTATS. Residues 673–700 are a coiled coil; it reads KMLKRLKTQMAEVRCMKTDVKNTLSEIK. The span at 752-761 shows a compositional bias: polar residues; sequence NSTNKKSNSP. Disordered stretches follow at residues 752–812 and 891–964; these read NSTN…SPRA and GASA…NSGR. Over residues 776–788 the composition is skewed to basic and acidic residues; sequence RAVDPGENSRSKG. A compositionally biased stretch (low complexity) spans 794-807; that stretch reads SEGSPGSSQSGSRH. The span at 904–916 shows a compositional bias: acidic residues; that stretch reads SDIECDTENEEQE. Residues 955–964 show a composition bias toward polar residues; it reads SFNTDENSGR.

The protein belongs to the TRIM/RBCC family. As to quaternary structure, associates with the PRC2/EED-EZH2 complex. In terms of processing, auto-ubiquitinated. In terms of tissue distribution, ubiquitous. Highly expressed in testis, while it is weakly expressed in other tissues.

It localises to the chromosome. The protein localises to the cytoplasm. The protein resides in the perinuclear region. Its subcellular location is the peroxisome membrane. The enzyme catalyses S-ubiquitinyl-[E2 ubiquitin-conjugating enzyme]-L-cysteine + [acceptor protein]-L-lysine = [E2 ubiquitin-conjugating enzyme]-L-cysteine + N(6)-ubiquitinyl-[acceptor protein]-L-lysine.. It functions in the pathway protein modification; protein ubiquitination. E3 ubiquitin-protein ligase required to prevent centriole reduplication. Probably acts by ubiquitinating positive regulators of centriole reduplication. Mediates monoubiquitination of 'Lys-119' of histone H2A (H2AK119Ub), a specific tag for epigenetic transcriptional repression: associates with some Polycomb group (PcG) multiprotein PRC2-like complex and mediates repression of target genes. Also acts as a positive regulator of peroxisome import by mediating monoubiquitination of PEX5 at 'Lys-472': monoubiquitination promotes PEX5 stabilitation by preventing its polyubiquitination and degradation by the proteasome. Has anti-HIV activity. This Homo sapiens (Human) protein is E3 ubiquitin-protein ligase TRIM37.